A 443-amino-acid polypeptide reads, in one-letter code: UDP-glucuronic acid decarboxylase 4 (443 aa).

At Ala-2 the chain carries N-acetylalanine. Residues 2–43 (ASELTNRRHEIEQPEAESYYPKPIKPWFVAIRPIRYMLREQR) lie on the Cytoplasmic side of the membrane. Residues 44–64 (LVFVLVGIAIATLGFTIFSKS) traverse the membrane as a helical; Signal-anchor for type II membrane protein segment. Residues 65–443 (SNHQPIPYDV…DSSTTSSSTE (379 aa)) are Lumenal-facing. 151–176 (DNFFTGRKENVMHHFNNPNFEMIRHD) is a binding site for NAD(+). Arg-260 serves as a coordination point for substrate. Residue Tyr-263 is the Proton acceptor of the active site. 263 to 267 (YDEGK) lines the NAD(+) pocket. Residue Asn-292 coordinates substrate. Arg-304 contacts NAD(+). Residues 305 to 309 (VVSNF), 322 to 329 (YGDGKQTR), and 389 to 393 (DPHKR) each bind substrate.

This sequence belongs to the NAD(P)-dependent epimerase/dehydratase family. UDP-glucuronic acid decarboxylase subfamily. The cofactor is NAD(+).

The protein localises to the golgi apparatus. Its subcellular location is the golgi stack membrane. The catalysed reaction is UDP-alpha-D-glucuronate + H(+) = UDP-alpha-D-xylose + CO2. Its pathway is nucleotide-sugar biosynthesis; UDP-alpha-D-xylose biosynthesis; UDP-alpha-D-xylose from UDP-alpha-D-glucuronate: step 1/1. Catalyzes the NAD-dependent decarboxylation of UDP-glucuronic acid to UDP-xylose. Necessary for the biosynthesis of the core tetrasaccharide in glycosaminoglycan biosynthesis. The protein is UDP-glucuronic acid decarboxylase 4 (UXS4) of Arabidopsis thaliana (Mouse-ear cress).